A 167-amino-acid polypeptide reads, in one-letter code: Pathogenesis-related protein PRMS (167 aa).

The N-terminal stretch at 1–27 (MEASNKLAVLLLWLVMAAATAVHPSYS) is a signal peptide. The region spanning 37–155 (PQNSARAAVG…NRGVFIICNY (119 aa)) is the SCP domain. 3 disulfides stabilise this stretch: Cys71/Cys143, Cys116/Cys122, and Cys138/Cys153.

It belongs to the CRISP family.

In terms of biological role, probably involved in the defense reaction of plants against pathogens. This Zea mays (Maize) protein is Pathogenesis-related protein PRMS (PRMS).